The chain runs to 301 residues: MLRQTLTQASRMRPCISVVGFRGFHASSPCEATLKEIEQRLKSIKNIEKITKTIKTVAQTKLTRAQRAMEASNKYYRVSDEVFKEAGTKAPEEGKTLMVACSSDKGLCGGIHSSISRLIRRELHDPKTFENTSLCILGEKVRTQLLRFCPESFYLTFAHIGGASPSFEEALQISSNILEHAKDYDRIVLVYNKFASAVSFETVMKNLYTTKAINESPNLSAYEVSDEVHQPLMEFAFANAIFSAMAEAHCSEMSSRRNAMENASKSAGDMINKFSIQYNRQRQASITNELIDIVTGANSLA.

This sequence belongs to the ATPase gamma chain family. F-type ATPases have 2 components, CF(1) - the catalytic core - and CF(0) - the membrane proton channel. CF(1) has five subunits: alpha(3), beta(3), gamma(1), delta(1), epsilon(1). CF(0) has three main subunits: a, b and c.

The protein localises to the mitochondrion. The protein resides in the mitochondrion inner membrane. Functionally, mitochondrial membrane ATP synthase (F(1)F(0) ATP synthase or Complex V) produces ATP from ADP in the presence of a proton gradient across the membrane which is generated by electron transport complexes of the respiratory chain. F-type ATPases consist of two structural domains, F(1) - containing the extramembraneous catalytic core, and F(0) - containing the membrane proton channel, linked together by a central stalk and a peripheral stalk. During catalysis, ATP synthesis in the catalytic domain of F(1) is coupled via a rotary mechanism of the central stalk subunits to proton translocation. Part of the complex F(1) domain and the central stalk which is part of the complex rotary element. The gamma subunit protrudes into the catalytic domain formed of alpha(3)beta(3). Rotation of the central stalk against the surrounding alpha(3)beta(3) subunits leads to hydrolysis of ATP in three separate catalytic sites on the beta subunits. The polypeptide is ATP synthase subunit gamma, mitochondrial (atp3) (Schizosaccharomyces pombe (strain 972 / ATCC 24843) (Fission yeast)).